Consider the following 301-residue polypeptide: Phosphatidylglycerol--prolipoprotein diacylglyceryl transferase (301 aa).

The next 4 membrane-spanning stretches (helical) occupy residues 10 to 30 (IAFS…LAGF), 57 to 77 (LLFY…MLFY), 92 to 112 (VWEG…AVAW), and 119 to 139 (MHMF…LGFG). Arg140 is an a 1,2-diacyl-sn-glycero-3-phospho-(1'-sn-glycerol) binding site. A run of 3 helical transmembrane segments spans residues 202–222 (PSQL…LWLF), 230–250 (YAVS…VEFV), and 264–284 (LTRG…LFWL).

It belongs to the Lgt family.

The protein localises to the cell inner membrane. It catalyses the reaction L-cysteinyl-[prolipoprotein] + a 1,2-diacyl-sn-glycero-3-phospho-(1'-sn-glycerol) = an S-1,2-diacyl-sn-glyceryl-L-cysteinyl-[prolipoprotein] + sn-glycerol 1-phosphate + H(+). It functions in the pathway protein modification; lipoprotein biosynthesis (diacylglyceryl transfer). In terms of biological role, catalyzes the transfer of the diacylglyceryl group from phosphatidylglycerol to the sulfhydryl group of the N-terminal cysteine of a prolipoprotein, the first step in the formation of mature lipoproteins. The sequence is that of Phosphatidylglycerol--prolipoprotein diacylglyceryl transferase from Xylella fastidiosa (strain M12).